The sequence spans 296 residues: 4-diphosphocytidyl-2-C-methyl-D-erythritol kinase (296 aa).

Residue Lys-13 is part of the active site. 98–108 (PVAAGIGGGSA) contributes to the ATP binding site. The active site involves Asp-140.

The protein belongs to the GHMP kinase family. IspE subfamily.

It carries out the reaction 4-CDP-2-C-methyl-D-erythritol + ATP = 4-CDP-2-C-methyl-D-erythritol 2-phosphate + ADP + H(+). The protein operates within isoprenoid biosynthesis; isopentenyl diphosphate biosynthesis via DXP pathway; isopentenyl diphosphate from 1-deoxy-D-xylulose 5-phosphate: step 3/6. Catalyzes the phosphorylation of the position 2 hydroxy group of 4-diphosphocytidyl-2C-methyl-D-erythritol. The chain is 4-diphosphocytidyl-2-C-methyl-D-erythritol kinase from Rhodopseudomonas palustris (strain HaA2).